The sequence spans 943 residues: uncharacterized protein (943 aa).

Met1 carries the post-translational modification N-acetylmethionine. Disordered regions lie at residues 37–63 (DETPISRNGNDSNINIQPSSVPQQQQQ), 152–177 (KHQFGKSKKNTKGTGGGGDGDDDDEV), 315–381 (LPMN…QQLQ), 397–472 (QNVP…PLKK), and 515–546 (EREALVEEKEKERAEKNTEANEEEEISHESDD). The segment covering 41–58 (ISRNGNDSNINIQPSSVP) has biased composition (polar residues). Residues 152-162 (KHQFGKSKKNT) are compositionally biased toward basic residues. Positions 318-358 (NNYNNHPGQFQNTPPVMPSGQQPPQQPRTLSLTNGPRYSPQ) are enriched in polar residues. Over residues 367 to 381 (QQISQRQQQQQQQLQ) the composition is skewed to low complexity. Residues 397–409 (QNVPQGFNPWSPN) are compositionally biased toward polar residues. The segment covering 417–433 (SMKQPISQSSISSKNNS) has biased composition (low complexity). Residues 434–470 (AYSIPNVQNNSLTTFSPSSPTDATAMPNSTKQGSSPL) are compositionally biased toward polar residues. Basic and acidic residues predominate over residues 515–533 (EREALVEEKEKERAEKNTE). 3 positions are modified to phosphoserine: Ser553, Ser586, and Ser619. The segment at 616–639 (EFPSPGKYNSNSDNGEMNTTNEVD) is disordered. Residues 622 to 639 (KYNSNSDNGEMNTTNEVD) are compositionally biased toward polar residues. At Ser649 the chain carries Phosphoserine. Residues 654–683 (IPERDPKRNVSDATIKRRESDGNGRRLSNV) are disordered. The span at 655-677 (PERDPKRNVSDATIKRRESDGNG) shows a compositional bias: basic and acidic residues. Ser681, Ser766, and Ser771 each carry phosphoserine.

This is an uncharacterized protein from Saccharomyces cerevisiae (strain ATCC 204508 / S288c) (Baker's yeast).